The following is a 201-amino-acid chain: Acyl-homoserine-lactone synthase (201 aa).

Belongs to the autoinducer synthase family.

It catalyses the reaction a fatty acyl-[ACP] + S-adenosyl-L-methionine = an N-acyl-L-homoserine lactone + S-methyl-5'-thioadenosine + holo-[ACP] + H(+). Required for the synthesis of PAI consisting of 3-oxo-N-(tetrahydro-2-oxo-3-furanyl)-dodecanamide also known as N-(3-oxododecanoyl)homoserine lactone, an autoinducer molecule which binds to LasR and thus acts in elastase biosynthesis regulation. In Pseudomonas aeruginosa (strain ATCC 15692 / DSM 22644 / CIP 104116 / JCM 14847 / LMG 12228 / 1C / PRS 101 / PAO1), this protein is Acyl-homoserine-lactone synthase (lasI).